A 1502-amino-acid chain; its full sequence is MKPEPRTLPPSPNWYCSRCSDAAPGGIFGFAARTSVFLVRVGPGAGASPGAPPFRVVGELVGHTERVSGFTFSHHPGQYNLCATSSDDGTVKVWDVETKTVVTEHTLHQHTISALHWSPTVKDLIVSGDEKGVVFCYWLNRNDSQHLFTEPRTIFCLTCSPHHENLVAIGYKDGIVVIIDISKKGEVIHRLRGHDDEIHSIAWCPLSGEDCLSISQEENSEEPDIPNGKLIAETPITKGCYLATGSKDQTIRIWSCSRGRGVMVLKLPFLKRRSGGVDPTVKERLWLTLHWPKNQPTQLVSSCFGGELLLWDLTQSWRRKYTLFSTSAEGHNHSRIVFNLCSLKTEDGKQLLLSTSMDRDVKCWDMATLECCWTLPSLGGFAYSLAFSPVDVGSLAIGVGDGMIRVWNTLSIKNNYDVKNFWQGVKSKVTALCWHPNKEGCLAFGTDDGKVGLYDTCSNKPPQISSTYHKKTVYRLAWGPPVPPMSLGGEGDRPSLTLYSCGGEGVVLQHNPWKLSGEAFDINKLVRDTNSIRYKLPVHTEISWKGDGKVLALGNEDGSIEIFQVPNLRLLCTIQQHHKLVNAIVWHHEHGSRPELSCLLASGSNNAVIYVHNLKAVLESNPESPITITEPYRTLSGHTAKITSLAWSPHHDGRLVSACYDGTAQVWDALREEPLFNFRGHRGRLLCVAWSPVDPECIYSGADDFCVYRWLTSMQDHSRPPQGKKCIELEKKRLSQFKPKLKKKKKPTLRLPVKQDSSVGNEDESVKENSGPAENGLSDQDGEEEAQEPELPPSPVVCVEPVSCTDICSGFEKSKVTVSSKATSLKKEPAKEKPEALLKKRKARSMLPLSTSLDHRSKEELHRDCLVLATATHAKAELNEDVSADLEERFHLGLFTDRATLYRMMETEGKGHLESGHPELFHQLMLWKGDLKGVLQAAAERGELTDSLVAVAPVAGYSVWLWAVEAFAKQLCFQDQYVKAASYLLSIHKVYEAVELLKSNHLYREAIAVAKARLRPEDPVLKELYLSWGSILERDGHYAIAAKCYLGATSAYDAAKVLARKGDAASLRTAAELAAIAGEHELAASLALRCAQELLLMKNWVGAQEALGLHESLQGQRLVFCLLELLCRHLEEKQPLEVRGPSSIYHQWATGSEGTLVQRVTGVWRSAFSVDTPEQCQAALQKLQDVKYPSATSNTPFRQLLLHVCHDLTLAMLSQQAAAWEEAVPALLQAVVRSYTSGNFTLMQEIYSAFLPGGCDHLRDKLGDLSPAMAAYKSLEAFCIYGQLYEVWWSLCGPGPESSVWVLSAESTVSDKQSKPEDSASAEDMEQPPGPGPRLSAESERLLSACKELFSERHASLQTSQRTVAEVQETLAEMIRQHQKSQLCKATTNGPSRDEPSRDEPSQEAERAPSQPPSPTEERNAPVSLPELTRRLTEANERIAEFPESVKAWPFPDVLECCLVLLHIGSQCPDAVDPEMQQQAQELLHKYGHTRAYRRHCQSRHT.

Positions 1–124 are important for interaction with U1 snRNA; it reads MKPEPRTLPP…LHWSPTVKDL (124 aa). The segment at 13 to 15 is interaction with U4 snRNA; that stretch reads NWY. Serine 48 carries the post-translational modification Phosphoserine. 11 WD repeats span residues 62–104, 107–148, 150–189, 193–264, 280–321, 333–374, 377–417, 424–464, 468–509, 533–573, and 576–622; these read GHTE…VVTE, LHQH…QHLF, EPRT…EVIH, GHDD…GVMV, TVKE…RRKY, HSRI…CCWT, SLGG…NNYD, GVKS…PPQI, YHKK…VVLQ, RYKL…LLCT, and QHHK…ESNP. The residue at position 624 (serine 624) is a Phosphoserine. WD repeat units lie at residues 637-677 and 680-720; these read GHTA…PLFN and GHRG…HSRP. 2 disordered regions span residues 740 to 797 and 819 to 838; these read KLKK…SPVV and SSKA…EALL. Lysine 754 participates in a covalent cross-link: Glycyl lysine isopeptide (Lys-Gly) (interchain with G-Cter in SUMO2). Residues serine 757, serine 770, and serine 778 each carry the phosphoserine modification. Positions 825 to 838 are enriched in basic and acidic residues; sequence LKKEPAKEKPEALL. Serine 845 bears the Phosphoserine mark. Disordered stretches follow at residues 1309–1338 and 1378–1427; these read VSDK…LSAE and HQKS…SLPE. Positions 1355-1382 form a coiled coil; sequence ASLQTSQRTVAEVQETLAEMIRQHQKSQ. Polar residues predominate over residues 1380-1391; sequence KSQLCKATTNGP. Residues 1392–1407 are compositionally biased toward basic and acidic residues; it reads SRDEPSRDEPSQEAER.

The protein belongs to the WD repeat gemin-5 family. As to quaternary structure, part of the core SMN complex that contains SMN1, GEMIN2/SIP1, DDX20/GEMIN3, GEMIN4, GEMIN5, GEMIN6, GEMIN7, GEMIN8 and STRAP/UNRIP. Part of the SMN-Sm complex that contains SMN1, GEMIN2/SIP1, DDX20/GEMIN3, GEMIN4, GEMIN5, GEMIN6, GEMIN7, GEMIN8, STRAP/UNRIP and the Sm proteins SNRPB, SNRPD1, SNRPD2, SNRPD3, SNRPE, SNRPF and SNRPG. Interacts directly with SMN1, SNRPB, SNRPD1, SNRPD2, SNRPD3 and SNRPE. Identified in a SMN complex that contains GEMIN2/SIP1. Interacts with cytosolic DDX20/GEMIN3 and GEMIN4. Interacts with SNRNP70 and HNRNPU. Identified in a complex with 80S ribosomes; binds to the 60S large ribosomal subunit. Interacts with the ribosomal subunits RPL3 and RPL4.

Its subcellular location is the nucleus. The protein localises to the nucleoplasm. The protein resides in the gem. It localises to the cytoplasm. In terms of biological role, the SMN complex catalyzes the assembly of small nuclear ribonucleoproteins (snRNPs), the building blocks of the spliceosome, and thereby plays an important role in the splicing of cellular pre-mRNAs. Most spliceosomal snRNPs contain a common set of Sm proteins SNRPB, SNRPD1, SNRPD2, SNRPD3, SNRPE, SNRPF and SNRPG that assemble in a heptameric protein ring on the Sm site of the small nuclear RNA to form the core snRNP (Sm core). In the cytosol, the Sm proteins SNRPD1, SNRPD2, SNRPE, SNRPF and SNRPG are trapped in an inactive 6S pICln-Sm complex by the chaperone CLNS1A that controls the assembly of the core snRNP. To assemble core snRNPs, the SMN complex accepts the trapped 5Sm proteins from CLNS1A forming an intermediate. Binding of snRNA inside 5Sm ultimately triggers eviction of the SMN complex, thereby allowing binding of SNRPD3 and SNRPB to complete assembly of the core snRNP. Within the SMN complex, GEMIN5 recognizes and delivers the small nuclear RNAs (snRNAs) to the SMN complex. Binds to the 7-methylguanosine cap of RNA molecules. Binds to the 3'-UTR of SMN1 mRNA and regulates its translation; does not affect mRNA stability. May play a role in the regulation of protein synthesis via its interaction with ribosomes. The sequence is that of Gem-associated protein 5 (Gemin5) from Mus musculus (Mouse).